Reading from the N-terminus, the 259-residue chain is (3R)-3-hydroxyacyl-CoA dehydrogenase (259 aa).

NAD(+) is bound by residues 13–21 (LVTGAGSGI) and 40–41 (DL). Residue S58 is modified to Phosphoserine. Residue 72–74 (ADV) coordinates NAD(+). S154 lines the substrate pocket. An N6-succinyllysine modification is found at K158. The active-site Proton acceptor is the Y167. Residues 167–171 (YAASK) and 200–202 (ITT) contribute to the NAD(+) site. Position 171 is an N6-succinyllysine (K171).

The protein belongs to the short-chain dehydrogenases/reductases (SDR) family. Heterotetramer with CBR4; contains two molecules of HSD17B8 and CBR4.

The protein localises to the mitochondrion matrix. The catalysed reaction is a (3R)-3-hydroxyacyl-CoA + NAD(+) = a 3-oxoacyl-CoA + NADH + H(+). The enzyme catalyses 17beta-estradiol + NAD(+) = estrone + NADH + H(+). It catalyses the reaction testosterone + NAD(+) = androst-4-ene-3,17-dione + NADH + H(+). It carries out the reaction 17beta-hydroxy-5alpha-androstan-3-one + NAD(+) = 5alpha-androstan-3,17-dione + NADH + H(+). The protein operates within steroid biosynthesis; estrogen biosynthesis. It participates in lipid metabolism; fatty acid biosynthesis. It functions in the pathway lipid metabolism; mitochondrial fatty acid beta-oxidation. Functionally, required for the solubility and assembly of the heterotetramer 3-ketoacyl-[acyl carrier protein] (ACP) reductase functional complex (KAR or KAR1) that forms part of the mitochondrial fatty acid synthase (mtFAS). Alpha-subunit of the KAR complex that acts as scaffold protein required for the stability of carbonyl reductase type-4 (CBR4, beta-subunit of the KAR complex) and for its 3-ketoacyl-ACP reductase activity, thereby participating in mitochondrial fatty acid biosynthesis. Catalyzes the NAD-dependent conversion of (3R)-3-hydroxyacyl-CoA into 3-ketoacyl-CoA (3-oxoacyl-CoA) with no chain length preference; this enzymatic activity is not needed for the KAR function. Prefers (3R)-3-hydroxyacyl-CoA over (3S)-3-hydroxyacyl-CoA and displays enzymatic activity only in the presence of NAD(+). Cooperates with enoyl-CoA hydratase 1 in mitochondria, together they constitute an alternative route to the auxiliary enzyme pathways for the breakdown of Z-PUFA (cis polyunsaturated fatty acid) enoyl-esters. NAD-dependent 17-beta-hydroxysteroid dehydrogenase with highest activity towards estradiol (17beta-estradiol or E2). Has very low activity towards testosterone and dihydrotestosterone (17beta-hydroxy-5alpha-androstan-3-one). Primarily an oxidative enzyme, it can switch to a reductive mode determined in the appropriate physiologic milieu and catalyze the reduction of estrone (E1) to form biologically active 17beta-estradiol. This Canis lupus familiaris (Dog) protein is (3R)-3-hydroxyacyl-CoA dehydrogenase (HSD17B8).